We begin with the raw amino-acid sequence, 198 residues long: Photosystem I assembly protein Ycf4 (198 aa).

2 helical membrane passes run 35–57 (WFYN…SSYI) and 70–92 (IIFF…FSIN).

It belongs to the Ycf4 family.

The protein localises to the plastid. It localises to the chloroplast thylakoid membrane. Its function is as follows. Seems to be required for the assembly of the photosystem I complex. In Euglena gracilis, this protein is Photosystem I assembly protein Ycf4.